Reading from the N-terminus, the 497-residue chain is Bifunctional protein GlmU (497 aa).

The interval 1-243 (MTSSTTSSTD…SALVAGVNDR (243 aa)) is pyrophosphorylase. Residues 16–19 (LAAG), Lys30, Gln87, and 92–93 (GT) each bind UDP-N-acetyl-alpha-D-glucosamine. Asp118 is a binding site for Mg(2+). UDP-N-acetyl-alpha-D-glucosamine-binding residues include Gly153, Glu168, Asn183, and Asn241. Asn241 lines the Mg(2+) pocket. The tract at residues 244–264 (VQLAALGAELNRRIVTAHQRA) is linker. An N-acetyltransferase region spans residues 265–497 (GVTVIDPGST…LGHHDDSQGS (233 aa)). Residues Arg346 and Lys364 each contribute to the UDP-N-acetyl-alpha-D-glucosamine site. The active-site Proton acceptor is His376. UDP-N-acetyl-alpha-D-glucosamine-binding residues include Tyr379 and Asn390. Residues Ala393, 399-400 (NY), Ser418, and Ala436 contribute to the acetyl-CoA site. Positions 473–497 (ARAAERASGEAAEQALGHHDDSQGS) are disordered. Basic and acidic residues predominate over residues 488-497 (LGHHDDSQGS).

In the N-terminal section; belongs to the N-acetylglucosamine-1-phosphate uridyltransferase family. The protein in the C-terminal section; belongs to the transferase hexapeptide repeat family. As to quaternary structure, homotrimer. It depends on Mg(2+) as a cofactor.

The protein localises to the cytoplasm. It carries out the reaction alpha-D-glucosamine 1-phosphate + acetyl-CoA = N-acetyl-alpha-D-glucosamine 1-phosphate + CoA + H(+). The enzyme catalyses N-acetyl-alpha-D-glucosamine 1-phosphate + UTP + H(+) = UDP-N-acetyl-alpha-D-glucosamine + diphosphate. It participates in nucleotide-sugar biosynthesis; UDP-N-acetyl-alpha-D-glucosamine biosynthesis; N-acetyl-alpha-D-glucosamine 1-phosphate from alpha-D-glucosamine 6-phosphate (route II): step 2/2. The protein operates within nucleotide-sugar biosynthesis; UDP-N-acetyl-alpha-D-glucosamine biosynthesis; UDP-N-acetyl-alpha-D-glucosamine from N-acetyl-alpha-D-glucosamine 1-phosphate: step 1/1. It functions in the pathway bacterial outer membrane biogenesis; LPS lipid A biosynthesis. In terms of biological role, catalyzes the last two sequential reactions in the de novo biosynthetic pathway for UDP-N-acetylglucosamine (UDP-GlcNAc). The C-terminal domain catalyzes the transfer of acetyl group from acetyl coenzyme A to glucosamine-1-phosphate (GlcN-1-P) to produce N-acetylglucosamine-1-phosphate (GlcNAc-1-P), which is converted into UDP-GlcNAc by the transfer of uridine 5-monophosphate (from uridine 5-triphosphate), a reaction catalyzed by the N-terminal domain. The chain is Bifunctional protein GlmU from Mycobacterium sp. (strain JLS).